We begin with the raw amino-acid sequence, 1244 residues long: DNA polymerase beta (1244 aa).

Repeat copies occupy residues 1069 to 1072 (AGNP), 1073 to 1076 (AGNP), 1077 to 1080 (AGNP), 1081 to 1084 (AGNP), 1085 to 1088 (AGNP), 1089 to 1092 (AGNP), 1093 to 1096 (AGNP), 1097 to 1100 (AGNP), 1101 to 1104 (AGNP), 1105 to 1108 (AGNP), 1109 to 1112 (AGNP), 1113 to 1116 (AGNP), and 1117 to 1120 (AGNP). Positions 1069-1118 (AGNPAGNPAGNPAGNPAGNPAGNPAGNPAGNPAGNPAGNPAGNPAGNPAG) are disordered. The tract at residues 1069-1120 (AGNPAGNPAGNPAGNPAGNPAGNPAGNPAGNPAGNPAGNPAGNPAGNPAGNP) is 13 X 4 AA tandem repeats of A-G-N-P.

The protein belongs to the DNA polymerase type-B family.

The enzyme catalyses DNA(n) + a 2'-deoxyribonucleoside 5'-triphosphate = DNA(n+1) + diphosphate. Functionally, DNA-directed DNA polymerase involved in viral DNA replication. In African swine fever virus (isolate Pig/Portugal/Lis 60/1960) (ASFV), this protein is DNA polymerase beta (DPOL).